We begin with the raw amino-acid sequence, 183 residues long: Adenine phosphoribosyltransferase (183 aa).

This sequence belongs to the purine/pyrimidine phosphoribosyltransferase family. In terms of assembly, homodimer.

It localises to the cytoplasm. The catalysed reaction is AMP + diphosphate = 5-phospho-alpha-D-ribose 1-diphosphate + adenine. It participates in purine metabolism; AMP biosynthesis via salvage pathway; AMP from adenine: step 1/1. Its function is as follows. Catalyzes a salvage reaction resulting in the formation of AMP, that is energically less costly than de novo synthesis. The chain is Adenine phosphoribosyltransferase from Erwinia tasmaniensis (strain DSM 17950 / CFBP 7177 / CIP 109463 / NCPPB 4357 / Et1/99).